Consider the following 89-residue polypeptide: Small ribosomal subunit protein uS15 (89 aa).

Residues 1–21 show a composition bias toward basic and acidic residues; sequence MSLHQERKSELVSKFRTHESD. Positions 1-25 are disordered; that stretch reads MSLHQERKSELVSKFRTHESDTGSP.

It belongs to the universal ribosomal protein uS15 family. As to quaternary structure, part of the 30S ribosomal subunit. Forms a bridge to the 50S subunit in the 70S ribosome, contacting the 23S rRNA.

One of the primary rRNA binding proteins, it binds directly to 16S rRNA where it helps nucleate assembly of the platform of the 30S subunit by binding and bridging several RNA helices of the 16S rRNA. Its function is as follows. Forms an intersubunit bridge (bridge B4) with the 23S rRNA of the 50S subunit in the ribosome. This chain is Small ribosomal subunit protein uS15, found in Myxococcus xanthus (strain DK1622).